Consider the following 341-residue polypeptide: DNA-directed RNA polymerase subunit alpha (341 aa).

Residues 1 to 223 form an alpha N-terminal domain (alpha-NTD) region; the sequence is MEQKRPQLKA…DELSVFGNVE (223 aa). Positions 268–341 are alpha C-terminal domain (alpha-CTD); the sequence is PQPFPTDQDT…LAQFGLALRD (74 aa).

Belongs to the RNA polymerase alpha chain family. Homodimer. The RNAP catalytic core consists of 2 alpha, 1 beta, 1 beta' and 1 omega subunit. When a sigma factor is associated with the core the holoenzyme is formed, which can initiate transcription.

The enzyme catalyses RNA(n) + a ribonucleoside 5'-triphosphate = RNA(n+1) + diphosphate. In terms of biological role, DNA-dependent RNA polymerase catalyzes the transcription of DNA into RNA using the four ribonucleoside triphosphates as substrates. The sequence is that of DNA-directed RNA polymerase subunit alpha from Deinococcus radiodurans (strain ATCC 13939 / DSM 20539 / JCM 16871 / CCUG 27074 / LMG 4051 / NBRC 15346 / NCIMB 9279 / VKM B-1422 / R1).